The chain runs to 396 residues: Tryptophan synthase beta chain (396 aa).

Lys86 bears the N6-(pyridoxal phosphate)lysine mark.

It belongs to the TrpB family. Tetramer of two alpha and two beta chains. Requires pyridoxal 5'-phosphate as cofactor.

It carries out the reaction (1S,2R)-1-C-(indol-3-yl)glycerol 3-phosphate + L-serine = D-glyceraldehyde 3-phosphate + L-tryptophan + H2O. It functions in the pathway amino-acid biosynthesis; L-tryptophan biosynthesis; L-tryptophan from chorismate: step 5/5. In terms of biological role, the beta subunit is responsible for the synthesis of L-tryptophan from indole and L-serine. This chain is Tryptophan synthase beta chain, found in Sodalis glossinidius (strain morsitans).